The primary structure comprises 365 residues: tRNA/tmRNA (uracil-C(5))-methyltransferase (365 aa).

5 residues coordinate S-adenosyl-L-methionine: Q189, Y217, N222, E238, and D298. Catalysis depends on C323, which acts as the Nucleophile. Residue E357 is the Proton acceptor of the active site.

The protein belongs to the class I-like SAM-binding methyltransferase superfamily. RNA M5U methyltransferase family. TrmA subfamily.

It carries out the reaction uridine(54) in tRNA + S-adenosyl-L-methionine = 5-methyluridine(54) in tRNA + S-adenosyl-L-homocysteine + H(+). The catalysed reaction is uridine(341) in tmRNA + S-adenosyl-L-methionine = 5-methyluridine(341) in tmRNA + S-adenosyl-L-homocysteine + H(+). In terms of biological role, dual-specificity methyltransferase that catalyzes the formation of 5-methyluridine at position 54 (m5U54) in all tRNAs, and that of position 341 (m5U341) in tmRNA (transfer-mRNA). This is tRNA/tmRNA (uracil-C(5))-methyltransferase from Shewanella baltica (strain OS155 / ATCC BAA-1091).